Consider the following 404-residue polypeptide: uncharacterized protein (404 aa).

This is an uncharacterized protein from Alcelaphine herpesvirus 1 (strain C500) (AlHV-1).